The sequence spans 166 residues: PTS system glucose-specific EIIA component (166 aa).

Residues Asp-34–Asn-138 form the PTS EIIA type-1 domain. Zn(2+) is bound by residues His-71 and His-86. His-86 functions as the Tele-phosphohistidine intermediate; for EIIA activity in the catalytic mechanism. The residue at position 86 (His-86) is a Phosphohistidine; by HPr.

Heterodimer with glycerol kinase (glpk). Requires Zn(2+) as cofactor.

It is found in the cytoplasm. In terms of biological role, the phosphoenolpyruvate-dependent sugar phosphotransferase system (sugar PTS), a major carbohydrate active transport system, catalyzes the phosphorylation of incoming sugar substrates concomitantly with their translocation across the cell membrane. The enzyme II complex composed of PtsG and Crr is involved in glucose transport. This is PTS system glucose-specific EIIA component (crr) from Staphylococcus aureus (strain MSSA476).